A 622-amino-acid chain; its full sequence is Membrane protein insertase YidC (622 aa).

A helical transmembrane segment spans residues 6 to 26; the sequence is IVLLIIFSTSLLFLWDAWVKE. The disordered stretch occupies residues 47 to 87; it reads TQSKNNDGLPIPGSELTASQTGSDLNGIPSSGDTADSVTPR. A compositionally biased stretch (polar residues) spans 62–83; that stretch reads LTASQTGSDLNGIPSSGDTADS. Helical transmembrane passes span 381–401, 451–471, and 525–545; these read WGIA…PLSA, FPIL…LAAV, and PVAF…YSLV. Positions 563–622 are disordered; it reads TAPSQDAPESPASKDAPELPVSNQVINDSENTEAPASGPADSPKKPVNIPRRMHKRTRKK. A compositionally biased stretch (polar residues) spans 583–596; the sequence is VSNQVINDSENTEA. A compositionally biased stretch (basic residues) spans 613–622; the sequence is RRMHKRTRKK.

This sequence belongs to the OXA1/ALB3/YidC family. Type 1 subfamily. Interacts with the Sec translocase complex via SecD. Specifically interacts with transmembrane segments of nascent integral membrane proteins during membrane integration.

The protein localises to the cell inner membrane. Required for the insertion and/or proper folding and/or complex formation of integral membrane proteins into the membrane. Involved in integration of membrane proteins that insert both dependently and independently of the Sec translocase complex, as well as at least some lipoproteins. Aids folding of multispanning membrane proteins. The chain is Membrane protein insertase YidC from Nitrosomonas eutropha (strain DSM 101675 / C91 / Nm57).